A 187-amino-acid chain; its full sequence is KS71A fimbrillin (187 aa).

Residues methionine 1–alanine 21 form the signal peptide. Cysteine 43 and cysteine 82 form a disulfide bridge.

It belongs to the fimbrial protein family.

Its subcellular location is the fimbrium. In terms of biological role, fimbriae (also called pili), polar filaments radiating from the surface of the bacterium to a length of 0.5-1.5 micrometers and numbering 100-300 per cell, enable bacteria to colonize the epithelium of specific host organs. The polypeptide is KS71A fimbrillin (KS71A) (Escherichia coli).